Here is a 521-residue protein sequence, read N- to C-terminus: Probable tRNA (uracil-O(2)-)-methyltransferase (521 aa).

It belongs to the TRM44 family.

The protein resides in the cytoplasm. It catalyses the reaction uridine(44) in tRNA(Ser) + S-adenosyl-L-methionine = 2'-O-methyluridine(44) in tRNA(Ser) + S-adenosyl-L-homocysteine + H(+). In terms of biological role, probable adenosyl-L-methionine (AdoMet)-dependent tRNA (uracil-O(2)-)-methyltransferase. In Drosophila melanogaster (Fruit fly), this protein is Probable tRNA (uracil-O(2)-)-methyltransferase (trmt44).